A 318-amino-acid polypeptide reads, in one-letter code: Transaldolase (318 aa).

K131 serves as the catalytic Schiff-base intermediate with substrate.

The protein belongs to the transaldolase family. Type 1 subfamily. In terms of assembly, homodimer.

The protein localises to the cytoplasm. It catalyses the reaction D-sedoheptulose 7-phosphate + D-glyceraldehyde 3-phosphate = D-erythrose 4-phosphate + beta-D-fructose 6-phosphate. The protein operates within carbohydrate degradation; pentose phosphate pathway; D-glyceraldehyde 3-phosphate and beta-D-fructose 6-phosphate from D-ribose 5-phosphate and D-xylulose 5-phosphate (non-oxidative stage): step 2/3. Transaldolase is important for the balance of metabolites in the pentose-phosphate pathway. The polypeptide is Transaldolase (Cellvibrio japonicus (strain Ueda107) (Pseudomonas fluorescens subsp. cellulosa)).